A 505-amino-acid polypeptide reads, in one-letter code: Deoxyguanosinetriphosphate triphosphohydrolase (505 aa).

Residues 66 to 273 (RLTHSMEVQQ…MEAADDISYC (208 aa)) form the HD domain.

It belongs to the dGTPase family. Type 1 subfamily. In terms of assembly, homotetramer. Mg(2+) is required as a cofactor.

The enzyme catalyses dGTP + H2O = 2'-deoxyguanosine + triphosphate + H(+). Functionally, dGTPase preferentially hydrolyzes dGTP over the other canonical NTPs. The sequence is that of Deoxyguanosinetriphosphate triphosphohydrolase from Salmonella arizonae (strain ATCC BAA-731 / CDC346-86 / RSK2980).